A 293-amino-acid chain; its full sequence is Ethanolamine ammonia-lyase small subunit (293 aa).

Adenosylcob(III)alamin is bound by residues Val-207 and Glu-228.

Belongs to the EutC family. As to quaternary structure, the basic unit is a heterodimer which dimerizes to form tetramers. The heterotetramers trimerize; 6 large subunits form a core ring with 6 small subunits projecting outwards. Adenosylcob(III)alamin serves as cofactor.

The protein resides in the bacterial microcompartment. The catalysed reaction is ethanolamine = acetaldehyde + NH4(+). Its pathway is amine and polyamine degradation; ethanolamine degradation. Its function is as follows. Catalyzes the deamination of various vicinal amino-alcohols to oxo compounds. Allows this organism to utilize ethanolamine as the sole source of nitrogen and carbon in the presence of external vitamin B12. The polypeptide is Ethanolamine ammonia-lyase small subunit (Listeria monocytogenes serovar 1/2a (strain ATCC BAA-679 / EGD-e)).